Reading from the N-terminus, the 395-residue chain is Sensor protein DltS (395 aa).

Transmembrane regions (helical) follow at residues 9-29 and 136-156; these read FVFL…AVSN and FLIL…SLYL. Positions 177–387 constitute a Histidine kinase domain; sequence DASHELKTPI…RLEVQLPIDG (211 aa). H180 bears the Phosphohistidine; by autocatalysis mark.

The protein resides in the cell membrane. It carries out the reaction ATP + protein L-histidine = ADP + protein N-phospho-L-histidine.. Its function is as follows. Member of the two-component regulatory system DltS/DltR. Regulates the expression of the dlt operon. Probably phosphorylates DltR. In Streptococcus agalactiae serotype III (strain NEM316), this protein is Sensor protein DltS (dltS).